Consider the following 427-residue polypeptide: MESLTLQPIARVDGTINLPGSKSVSNRALLLAALAHGKTVLTNLLDSDDVRHMLNALTALGVSYTLSADRTRCEIIGNGGPLHAESARELFLGNAGTAMRPLAAALCLGSNDIVLTGEPRMKERPIGHLVDALRQGGAKITYLEQENYPPLRLQGGFTGGNVDVDGSVSSQFLTALLMTAPLAPEDTVIRIKGDLVSKPYIDITLNLMKTFGVEIENQHYQQFVVKGGQSYQSPGTYLVEGDASSASYFLAAAAIRGGTVKVTGIGRNSMQGDIRFADVLEKMGATICWGDDYISCTRGELNAIDMDMNHIPDAAMTIATAALFAKGTTTLRNIYNWRVKETDRLFAMATELRKVGAEVEEGHDFIRITPPEKLKFAEIATYNDHRMAMCFSLVALSDTPVTILDPKCTAKTFPDYFEQLARISQPG.

3-phosphoshikimate-binding residues include Lys22, Ser23, and Arg27. Position 22 (Lys22) interacts with phosphoenolpyruvate. Phosphoenolpyruvate-binding residues include Gly96 and Arg124. 7 residues coordinate 3-phosphoshikimate: Ser169, Ser170, Gln171, Ser197, Asp313, Asn336, and Lys340. Residue Gln171 coordinates phosphoenolpyruvate. The active-site Proton acceptor is the Asp313. Phosphoenolpyruvate contacts are provided by Arg344, Arg386, and Lys411.

It belongs to the EPSP synthase family. As to quaternary structure, monomer.

It localises to the cytoplasm. It catalyses the reaction 3-phosphoshikimate + phosphoenolpyruvate = 5-O-(1-carboxyvinyl)-3-phosphoshikimate + phosphate. It functions in the pathway metabolic intermediate biosynthesis; chorismate biosynthesis; chorismate from D-erythrose 4-phosphate and phosphoenolpyruvate: step 6/7. In terms of biological role, catalyzes the transfer of the enolpyruvyl moiety of phosphoenolpyruvate (PEP) to the 5-hydroxyl of shikimate-3-phosphate (S3P) to produce enolpyruvyl shikimate-3-phosphate and inorganic phosphate. This Escherichia coli O1:K1 / APEC protein is 3-phosphoshikimate 1-carboxyvinyltransferase.